A 179-amino-acid chain; its full sequence is Large ribosomal subunit protein uL5 (179 aa).

The protein belongs to the universal ribosomal protein uL5 family. In terms of assembly, part of the 50S ribosomal subunit; part of the 5S rRNA/L5/L18/L25 subcomplex. Contacts the 5S rRNA and the P site tRNA. Forms a bridge to the 30S subunit in the 70S ribosome.

In terms of biological role, this is one of the proteins that bind and probably mediate the attachment of the 5S RNA into the large ribosomal subunit, where it forms part of the central protuberance. In the 70S ribosome it contacts protein S13 of the 30S subunit (bridge B1b), connecting the 2 subunits; this bridge is implicated in subunit movement. Contacts the P site tRNA; the 5S rRNA and some of its associated proteins might help stabilize positioning of ribosome-bound tRNAs. This is Large ribosomal subunit protein uL5 from Desulforapulum autotrophicum (strain ATCC 43914 / DSM 3382 / VKM B-1955 / HRM2) (Desulfobacterium autotrophicum).